Consider the following 477-residue polypeptide: (R)-2-hydroxyglutaryl-CoA dehydratase, subunit alpha (477 aa).

This sequence belongs to the FldB/FldC dehydratase alpha/beta subunit family. The (R)-2-hydroxyglutaryl-CoA dehydratase enzyme system is a heterodimer composed of an alpha subunit (HgdA) and a beta subunit (HgdB). It depends on [4Fe-4S] cluster as a cofactor. FMN serves as cofactor. The cofactor is Mg(2+).

The protein resides in the cytoplasm. It carries out the reaction (R)-2-hydroxyglutaryl-CoA = (2E)-glutaconyl-CoA + H2O. It functions in the pathway amino-acid degradation; L-glutamate degradation via hydroxyglutarate pathway; crotonoyl-CoA from L-glutamate: step 4/5. Its activity is regulated as follows. Activated by the HgdC. Reversibly inactivated by oxidants such as 2-nitrophenol, 3-nitrophenol, 4-nitrophenol, 4-nitrobenzoate, carbonyl cyanide 4-(trifluoromethoxy)phenylhydrazone (FCCP) and chloramphenicol. Irreversibly inactivated by oxidants such as hydroxylamine and nitrite. Functionally, involved in the fermentation of L-glutamate via the hydroxyglutarate pathway. Catalyzes the reversible syn-elimination of water from (R)-2-hydroxyglutaryl-CoA to yield (E)-glutaconyl-CoA. The dehydration mechanism involves a transient one electron reduction of the thioester from (R)-2-hydroxyglutaryl-CoA, generating a ketyl radical. Prior to (E)-glutaconyl-CoA formation, the ketyl radical is subsequently reoxidized by electron transfer back to the HgdA-HgdB complex (CompD) to avoid change in oxidation state of the substrate. The appropriate redox state of dehydratase HgdA-HgdB complex (CompD) is maintained by HgdC (CompA) via hydrolysis of ATP and ATP-dependent electron transfer. Since the electron is recycled, the dehydratase is able to perform several turnovers with only catalytic amounts of ATP and substoichiometric amounts of HgdC (CompA). This chain is (R)-2-hydroxyglutaryl-CoA dehydratase, subunit alpha, found in Acidaminococcus fermentans (strain ATCC 25085 / DSM 20731 / CCUG 9996 / CIP 106432 / VR4).